The chain runs to 200 residues: MALGGWRWARKALAAGRPLFQGRALLLTNTLGCGVLMAAGDGARQVWEVRARPGQRFSARRSASMFAVGCSMGPFLHFWYLWLDRLLPASGLRSLPSVMKKVLVDQTVASPILGVWYFLGLGSLEGQTLEESCQELRAKFWDFYKADWCVWPAAQLVNFLFIPSHFRVTYINGLTLGWDTYLSYLKYWVPEPLQTPGCAD.

3 helical membrane-spanning segments follow: residues 24-40 (ALLLTNTLGCGVLMAAG), 63-83 (ASMFAVGCSMGPFLHFWYLWL), and 102-122 (VLVDQTVASPILGVWYFLGLG).

Belongs to the peroxisomal membrane protein PXMP2/4 family. As to quaternary structure, interacts with the large mitochondrial ribosomal subunit.

Its subcellular location is the membrane. It is found in the mitochondrion inner membrane. In terms of biological role, required for the assembly and stability of the mitochondrial ribosome. Is a positive regulator of mitochondrial protein synthesis. The sequence is that of Mpv17-like protein 2 (Mpv17l2) from Mus musculus (Mouse).